The chain runs to 264 residues: ORC1-type DNA replication protein 2 (264 aa).

ATP contacts are provided by residues 73–77 (TGKSL), Tyr-220, and Arg-232.

The protein belongs to the CDC6/cdc18 family.

Involved in regulation of DNA replication. This Halobacterium salinarum (strain ATCC 700922 / JCM 11081 / NRC-1) (Halobacterium halobium) protein is ORC1-type DNA replication protein 2 (orc2).